The sequence spans 493 residues: UDP-N-acetylmuramoyl-L-alanyl-D-glutamate--2,6-diaminopimelate ligase (493 aa).

Residue S30 participates in UDP-N-acetyl-alpha-D-muramoyl-L-alanyl-D-glutamate binding. 114–120 (GTNGKTS) is an ATP binding site. Residues 156 to 157 (TT), S183, Q189, and R191 each bind UDP-N-acetyl-alpha-D-muramoyl-L-alanyl-D-glutamate. K223 carries the post-translational modification N6-carboxylysine. Meso-2,6-diaminopimelate is bound by residues R386, 410–413 (DNPR), G460, and E464. Residues 410 to 413 (DNPR) carry the Meso-diaminopimelate recognition motif motif.

This sequence belongs to the MurCDEF family. MurE subfamily. The cofactor is Mg(2+). Carboxylation is probably crucial for Mg(2+) binding and, consequently, for the gamma-phosphate positioning of ATP.

Its subcellular location is the cytoplasm. It catalyses the reaction UDP-N-acetyl-alpha-D-muramoyl-L-alanyl-D-glutamate + meso-2,6-diaminopimelate + ATP = UDP-N-acetyl-alpha-D-muramoyl-L-alanyl-gamma-D-glutamyl-meso-2,6-diaminopimelate + ADP + phosphate + H(+). The protein operates within cell wall biogenesis; peptidoglycan biosynthesis. In terms of biological role, catalyzes the addition of meso-diaminopimelic acid to the nucleotide precursor UDP-N-acetylmuramoyl-L-alanyl-D-glutamate (UMAG) in the biosynthesis of bacterial cell-wall peptidoglycan. This is UDP-N-acetylmuramoyl-L-alanyl-D-glutamate--2,6-diaminopimelate ligase from Chromobacterium violaceum (strain ATCC 12472 / DSM 30191 / JCM 1249 / CCUG 213 / NBRC 12614 / NCIMB 9131 / NCTC 9757 / MK).